The sequence spans 129 residues: MTQPPTVAAVLAAHSRVVEVGIGARPDVAAALAERGCAVTATDIEACTVPETVRFVRDDVTDPERAVYEAADAVYALRCPPELQRAVVDVAGAVGAACYLTTLGGEPVVVPVSERRTVASGALFVARDA.

The protein belongs to the UPF0146 family.

The chain is UPF0146 protein VNG_2609C from Halobacterium salinarum (strain ATCC 700922 / JCM 11081 / NRC-1) (Halobacterium halobium).